Reading from the N-terminus, the 101-residue chain is Large ribosomal subunit protein bL21 (101 aa).

It belongs to the bacterial ribosomal protein bL21 family. Part of the 50S ribosomal subunit. Contacts protein L20.

This protein binds to 23S rRNA in the presence of protein L20. The sequence is that of Large ribosomal subunit protein bL21 from Metamycoplasma arthritidis (strain 158L3-1) (Mycoplasma arthritidis).